Consider the following 348-residue polypeptide: GMP reductase 2 (348 aa).

Residues Ser26–Arg27, Lys78, Asp129–Ala131, and Ile180–Gly181 contribute to the NADP(+) site. Residues Gly181, Gly183, and Cys186 each coordinate K(+). The active-site Thioimidate intermediate is Cys186. Thr188 (proton donor/acceptor) is an active-site residue. Residue Arg189 participates in K(+) binding. GMP contacts are provided by residues Asp219–Gly221, Gly242–Gly243, Gly268–Ser270, and Arg286–Gly290. NADP(+) contacts are provided by residues Met269 and Tyr285–Arg286. At Lys291 the chain carries N6-acetyllysine. Ser314 to Thr317 provides a ligand contact to NADP(+).

Belongs to the IMPDH/GMPR family. GuaC type 1 subfamily. In terms of assembly, homotetramer. As to expression, highly expressed in heart, skeletal muscle, kidney, brain, liver, prostate, spleen, placenta, testis and ovary. Low expression in colon, thymus and peripheral blood leukocytes.

It carries out the reaction IMP + NH4(+) + NADP(+) = GMP + NADPH + 2 H(+). Its function is as follows. Catalyzes the irreversible NADPH-dependent deamination of GMP to IMP. It functions in the conversion of nucleobase, nucleoside and nucleotide derivatives of G to A nucleotides, and in maintaining the intracellular balance of A and G nucleotides. Plays a role in modulating cellular differentiation. This chain is GMP reductase 2, found in Homo sapiens (Human).